A 322-amino-acid polypeptide reads, in one-letter code: Lipoyl synthase (322 aa).

C66, C71, C77, C92, C96, C99, and S306 together coordinate [4Fe-4S] cluster. Positions 78-295 constitute a Radical SAM core domain; the sequence is FSKGTATFMI…EKEAYELGFS (218 aa).

The protein belongs to the radical SAM superfamily. Lipoyl synthase family. [4Fe-4S] cluster serves as cofactor.

Its subcellular location is the cytoplasm. It carries out the reaction [[Fe-S] cluster scaffold protein carrying a second [4Fe-4S](2+) cluster] + N(6)-octanoyl-L-lysyl-[protein] + 2 oxidized [2Fe-2S]-[ferredoxin] + 2 S-adenosyl-L-methionine + 4 H(+) = [[Fe-S] cluster scaffold protein] + N(6)-[(R)-dihydrolipoyl]-L-lysyl-[protein] + 4 Fe(3+) + 2 hydrogen sulfide + 2 5'-deoxyadenosine + 2 L-methionine + 2 reduced [2Fe-2S]-[ferredoxin]. The protein operates within protein modification; protein lipoylation via endogenous pathway; protein N(6)-(lipoyl)lysine from octanoyl-[acyl-carrier-protein]: step 2/2. In terms of biological role, catalyzes the radical-mediated insertion of two sulfur atoms into the C-6 and C-8 positions of the octanoyl moiety bound to the lipoyl domains of lipoate-dependent enzymes, thereby converting the octanoylated domains into lipoylated derivatives. The protein is Lipoyl synthase of Neisseria meningitidis serogroup C (strain 053442).